The chain runs to 349 residues: uncharacterized protein (349 aa).

Residues 17–37 (VIAIVSTGLVFAMTLVLTGLV) traverse the membrane as a helical segment. Positions 111–131 (FGAPEHGPGMPRVSDGRAPST) are disordered. Helical transmembrane passes span 230–250 (AITVVAVLLWIVAALIVGSVV), 284–304 (VVALLAAVVGGILSLLLAPLF), and 308–328 (VVVPLSAFVALPAIATVIGLL).

The protein belongs to the ABC-4 integral membrane protein family.

It localises to the cell membrane. This is an uncharacterized protein from Mycobacterium bovis (strain ATCC BAA-935 / AF2122/97).